A 226-amino-acid chain; its full sequence is UPF0502 protein Daci_5373 (226 aa).

The protein belongs to the UPF0502 family.

The polypeptide is UPF0502 protein Daci_5373 (Delftia acidovorans (strain DSM 14801 / SPH-1)).